The following is a 226-amino-acid chain: Gap junction beta-2 protein (226 aa).

An intramembrane segment occupies 2 to 13 (DWGALQTILGGV). Residues 14–20 (NKYSTSI) lie on the Cytoplasmic side of the membrane. The chain crosses the membrane as a helical span at residues 21 to 40 (GKIWLTVLFIFRIMILVVAA). Residues 41-73 (KEVWGDEQADFVCNTLQPGCKNVCYDHYFPISH) lie on the Extracellular side of the membrane. Residues Glu-42, Gly-45, and Glu-47 each contribute to the Ca(2+) site. Cystine bridges form between Cys-53-Cys-180, Cys-60-Cys-174, and Cys-64-Cys-169. The helical transmembrane segment at 74 to 94 (IRLWALQLIFVSTPALLVAMH) threads the bilayer. Over 95–135 (VAYRRHEKKRKFIKGEIKNEFKDIEEIKTQKVRIEGSLWWT) the chain is Cytoplasmic. A helical membrane pass occupies residues 136–156 (YTSSIFFRVVFEAAFMYVFYV). The Extracellular portion of the chain corresponds to 157–189 (MYDGFSMQRLVKCNAWPCPNTVDCFVSRPTEKT). Residues 190–210 (VFTVFMIAVSGICILLNVTEL) traverse the membrane as a helical segment. Residues 211 to 226 (CYLLIRYCSGKSKKPV) are Cytoplasmic-facing.

Belongs to the connexin family. Beta-type (group I) subfamily. In terms of assembly, a hemichannel or connexon is composed of a hexamer of connexins. A functional gap junction is formed by the apposition of two hemichannels. Forms heteromeric channels with GJB4. Interacts with CNST.

Its subcellular location is the cell membrane. The protein resides in the cell junction. The protein localises to the gap junction. Functionally, structural component of gap junctions. Gap junctions are dodecameric channels that connect the cytoplasm of adjoining cells. They are formed by the docking of two hexameric hemichannels, one from each cell membrane. Small molecules and ions diffuse from one cell to a neighboring cell via the central pore. In Macaca mulatta (Rhesus macaque), this protein is Gap junction beta-2 protein (GJB2).